A 455-amino-acid polypeptide reads, in one-letter code: MTLALSGQKVLVFGLAKSGVAALRLLRQQGADVTALDARGEDALGAVAHEVKALGATRVSGPTPPGLLASQDLVVVSPGVPLALPEIQAARAAGVAVWGEVELAGRMLSGVPLFGITGTNGKSTTTALTGTLFASGDKRTFVGGNLGRPFSEAAMSPGDWDALVVELSSYQLEGIRTLRPRGAAILNLTPDHIDRYPSHAAYGEAKARIFQNQQAGDFVVVNADDADVLGLARAAKAPVYGFSLTGKPVADAPALAGLAVVEPGGFRLAFLGEHYTLTNRALRGAHNAQNAMAAALLARLGGVASGAVQAGLDGYPGLPHRLESVRVLDGVEWVNDSKATNVDSVLVALRAFSQGVWLIAGGKGKGAPYAPMVEAGQGKVKGVLTIGDDADTLARAYAGAAQVHACGTLAHAVARARELAERGDTVLLSPACASFDQFKNFEDRGDSFKRLVEAL.

118–124 (GTNGKST) is an ATP binding site.

It belongs to the MurCDEF family.

It localises to the cytoplasm. The enzyme catalyses UDP-N-acetyl-alpha-D-muramoyl-L-alanine + D-glutamate + ATP = UDP-N-acetyl-alpha-D-muramoyl-L-alanyl-D-glutamate + ADP + phosphate + H(+). It participates in cell wall biogenesis; peptidoglycan biosynthesis. In terms of biological role, cell wall formation. Catalyzes the addition of glutamate to the nucleotide precursor UDP-N-acetylmuramoyl-L-alanine (UMA). The protein is UDP-N-acetylmuramoylalanine--D-glutamate ligase of Myxococcus xanthus (strain DK1622).